The following is a 761-amino-acid chain: 52 kDa repressor of the inhibitor of the protein kinase (761 aa).

The segment at 1 to 86 (MPNFCAAPNC…LRDNAIPTIF (86 aa)) adopts a THAP-type zinc-finger fold. The span at 116-132 (QKKIDETSEQEQKHKET) shows a compositional bias: basic and acidic residues. Positions 116–149 (QKKIDETSEQEQKHKETNNSNAQNPSEEEGEGQD) are disordered. Ser566 is subject to Phosphoserine.

As to quaternary structure, interacts with DNAJC3, probably sequestring it.

In terms of biological role, upstream regulator of interferon-induced serine/threonine protein kinase R (PKR). May block the PKR-inhibitory function of DNAJC3, resulting in restoration of kinase activity and suppression of cell growth. The polypeptide is 52 kDa repressor of the inhibitor of the protein kinase (Homo sapiens (Human)).